The chain runs to 662 residues: Serine/threonine-protein kinase PTK1/STK1 (662 aa).

The disordered stretch occupies residues 35 to 119 (GNKLKKKASL…SSTSRNLSNS (85 aa)). Residues 50–60 (STSTNDSESSS) show a composition bias toward low complexity. 2 stretches are compositionally biased toward polar residues: residues 61 to 91 (PKLP…SAST) and 98 to 119 (GSST…LSNS). The Protein kinase domain occupies 196-503 (DDENKTIGWG…IDDLFEDPWF (308 aa)). ATP contacts are provided by residues 202 to 210 (IGWGGSCEV) and K226. The active-site Proton acceptor is D329. Positions 605–631 (TLTLSEEPPATPAPSAPSAPSARVRGH) are disordered.

This sequence belongs to the protein kinase superfamily. Ser/Thr protein kinase family.

The catalysed reaction is L-seryl-[protein] + ATP = O-phospho-L-seryl-[protein] + ADP + H(+). The enzyme catalyses L-threonyl-[protein] + ATP = O-phospho-L-threonyl-[protein] + ADP + H(+). Functionally, essential determinant for low-affinity spermidine transport. The protein is Serine/threonine-protein kinase PTK1/STK1 (PTK1) of Saccharomyces cerevisiae (strain ATCC 204508 / S288c) (Baker's yeast).